The following is a 53-amino-acid chain: UPF0391 membrane protein Acid_3618 (53 aa).

The next 2 membrane-spanning stretches (helical) occupy residues 6-26 and 28-48; these read LVFLVFALIAAVLGFGGLAGA and VGIAKILFFVFLVIWLVAFLM.

It belongs to the UPF0391 family.

Its subcellular location is the cell membrane. The sequence is that of UPF0391 membrane protein Acid_3618 from Solibacter usitatus (strain Ellin6076).